The chain runs to 167 residues: Small ribosomal subunit protein uS3m (167 aa).

A mitochondrion-targeting transit peptide spans 1 to 35; it reads MAASVCSGLLGPRVLSWSRELPCAWRALHTSPVCA.

It belongs to the universal ribosomal protein uS3 family. Component of the mitochondrial small ribosomal subunit (mt-SSU). Mature mammalian 55S mitochondrial ribosomes consist of a small (28S) and a large (39S) subunit. The 28S small subunit contains a 12S ribosomal RNA (12S mt-rRNA) and 30 different proteins. The 39S large subunit contains a 16S rRNA (16S mt-rRNA), a copy of mitochondrial valine transfer RNA (mt-tRNA(Val)), which plays an integral structural role, and 52 different proteins.

It localises to the mitochondrion. The chain is Small ribosomal subunit protein uS3m (MRPS24) from Homo sapiens (Human).